A 385-amino-acid polypeptide reads, in one-letter code: tRNA-specific 2-thiouridylase MnmA (385 aa).

Residues 8 to 15 (AMSGGVDS) and Leu-34 contribute to the ATP site. The Nucleophile role is filled by Cys-102. Cys-102 and Cys-200 are disulfide-bonded. Gly-126 is an ATP binding site. An interaction with tRNA region spans residues 150 to 152 (KDQ). Residue Cys-200 is the Cysteine persulfide intermediate of the active site. The segment at 307–308 (RY) is interaction with tRNA.

This sequence belongs to the MnmA/TRMU family.

It is found in the cytoplasm. The catalysed reaction is S-sulfanyl-L-cysteinyl-[protein] + uridine(34) in tRNA + AH2 + ATP = 2-thiouridine(34) in tRNA + L-cysteinyl-[protein] + A + AMP + diphosphate + H(+). Its function is as follows. Catalyzes the 2-thiolation of uridine at the wobble position (U34) of tRNA, leading to the formation of s(2)U34. The chain is tRNA-specific 2-thiouridylase MnmA from Heliobacterium modesticaldum (strain ATCC 51547 / Ice1).